The following is a 421-amino-acid chain: Leucine-rich repeat-containing protein 42 (421 aa).

5 LRR repeats span residues V149–K170, E174–L195, S202–T222, N234–F255, and K259–L280. A disordered region spans residues H374–K406. Position 399 is a phosphoserine (S399).

This sequence belongs to the LRRC42 family.

This chain is Leucine-rich repeat-containing protein 42 (Lrrc42), found in Rattus norvegicus (Rat).